Consider the following 100-residue polypeptide: Urease subunit gamma (100 aa).

The protein belongs to the urease gamma subunit family. As to quaternary structure, heterotrimer of UreA (gamma), UreB (beta) and UreC (alpha) subunits. Three heterotrimers associate to form the active enzyme.

The protein localises to the cytoplasm. The enzyme catalyses urea + 2 H2O + H(+) = hydrogencarbonate + 2 NH4(+). It participates in nitrogen metabolism; urea degradation; CO(2) and NH(3) from urea (urease route): step 1/1. The sequence is that of Urease subunit gamma from Paraburkholderia phymatum (strain DSM 17167 / CIP 108236 / LMG 21445 / STM815) (Burkholderia phymatum).